Here is a 657-residue protein sequence, read N- to C-terminus: Chemoreceptor McpA (657 aa).

At 1–5 (MKRIR) the chain is on the cytoplasmic side. The helical transmembrane segment at 6–29 (LVDLPLIIKIGFAPAFALLMLAVM) threads the bilayer. The Periplasmic segment spans residues 30-188 (AGGAILVQKS…ESESAKRQAQ (159 aa)). The chain crosses the membrane as a helical span at residues 189–212 (ATAAMSVTIIMSLLTLGAVGALAF). The Cytoplasmic segment spans residues 213-657 (LTVMTTRKSI…APASDGWEEF (445 aa)). HAMP domains lie at 216-269 (MTTR…HLEQ) and 297-349 (QEAS…ETMK). The region spanning 354-583 (STDGLSTGAD…QSTAATHSLK (230 aa)) is the Methyl-accepting transducer domain. Q378 bears the Glutamate methyl ester (Gln) mark. A glutamate methyl ester (Glu) mark is found at E385 and E392. Q574 is modified (glutamate methyl ester (Gln)). The segment at 634–657 (ARPGRSSGSAALAQAPASDGWEEF) is disordered.

Belongs to the methyl-accepting chemotaxis (MCP) protein family.

The protein localises to the cell membrane. Chemotactic-signal transducers respond to changes in the concentration of attractants and repellents in the environment, transduce a signal from the outside to the inside of the cell, and facilitate sensory adaptation through the variation of the level of methylation. Attractants increase the level of methylation while repellents decrease the level of methylation. The chain is Chemoreceptor McpA (mcpA) from Caulobacter vibrioides (strain ATCC 19089 / CIP 103742 / CB 15) (Caulobacter crescentus).